An 891-amino-acid polypeptide reads, in one-letter code: DNA mismatch repair protein MutS (891 aa).

An ATP-binding site is contributed by 634 to 641 (GPNMGGKS).

This sequence belongs to the DNA mismatch repair MutS family.

This protein is involved in the repair of mismatches in DNA. It is possible that it carries out the mismatch recognition step. This protein has a weak ATPase activity. The sequence is that of DNA mismatch repair protein MutS from Burkholderia mallei (strain NCTC 10247).